Here is a 101-residue protein sequence, read N- to C-terminus: Putative metal transport protein HQ_3622A (101 aa).

An N-terminal signal peptide occupies residues 1 to 32 (MKIISMSMDSWIQRAALMLLGLVIVAPFFGWT). Residues 75 to 95 (IGTLISAGVGTVLTLIVAFGA) traverse the membrane as a helical segment.

It is found in the cell membrane. In terms of biological role, may be involved in metal transport. This is Putative metal transport protein HQ_3622A from Haloquadratum walsbyi (strain DSM 16790 / HBSQ001).